We begin with the raw amino-acid sequence, 466 residues long: Chromosomal replication initiator protein DnaA (466 aa).

Positions 1 to 77 (MSQEIWADVL…GAEHPQVEFQ (77 aa)) are domain I, interacts with DnaA modulators. Positions 77 to 121 (QVLPAAQDALLLPNDPPPAPEAAAPTPKTKAAPTPPPSTPGDNRK) are domain II. A disordered region spans residues 87–122 (LLPNDPPPAPEAAAPTPKTKAAPTPPPSTPGDNRKT). The segment covering 97–108 (EAAAPTPKTKAA) has biased composition (low complexity). Residues 122-338 (TLNPKYTFEN…GALMRVVAFA (217 aa)) form a domain III, AAA+ region region. Residues glycine 166, glycine 168, lysine 169, and threonine 170 each contribute to the ATP site. Residues 339–466 (SLNNVPFSRA…GKEEEEEVGA (128 aa)) are domain IV, binds dsDNA.

It belongs to the DnaA family. In terms of assembly, oligomerizes as a right-handed, spiral filament on DNA at oriC.

It is found in the cytoplasm. Its function is as follows. Plays an essential role in the initiation and regulation of chromosomal replication. ATP-DnaA binds to the origin of replication (oriC) to initiate formation of the DNA replication initiation complex once per cell cycle. Binds the DnaA box (a 9 base pair repeat at the origin) and separates the double-stranded (ds)DNA. Forms a right-handed helical filament on oriC DNA; dsDNA binds to the exterior of the filament while single-stranded (ss)DNA is stabiized in the filament's interior. The ATP-DnaA-oriC complex binds and stabilizes one strand of the AT-rich DNA unwinding element (DUE), permitting loading of DNA polymerase. After initiation quickly degrades to an ADP-DnaA complex that is not apt for DNA replication. Binds acidic phospholipids. Strand separation requires the DnaA boxes and adjacent DnaA-trio motifs but works equally well with ADP or ATP. In Deinococcus radiodurans (strain ATCC 13939 / DSM 20539 / JCM 16871 / CCUG 27074 / LMG 4051 / NBRC 15346 / NCIMB 9279 / VKM B-1422 / R1), this protein is Chromosomal replication initiator protein DnaA.